Consider the following 137-residue polypeptide: Putative mucosal pentraxin homolog (137 aa).

The Pentraxin (PTX) domain maps to 1–137 (MGMYLLHIGN…YVVTKPKVWA (137 aa)). Ca(2+) contacts are provided by glutamate 73, aspartate 75, and glutamine 85.

This sequence belongs to the pentraxin family. As to expression, not expressed in the intestinal tract including ascending colon, descending colon and rectum. Not expressed in the human colon cancer cell lines HT-29 and CaCo-2.

The protein is Putative mucosal pentraxin homolog (MPTX1) of Homo sapiens (Human).